A 157-amino-acid chain; its full sequence is 3-hydroxyacyl-[acyl-carrier-protein] dehydratase FabZ (157 aa).

His-58 is a catalytic residue.

Belongs to the thioester dehydratase family. FabZ subfamily.

Its subcellular location is the cytoplasm. The catalysed reaction is a (3R)-hydroxyacyl-[ACP] = a (2E)-enoyl-[ACP] + H2O. Its function is as follows. Involved in unsaturated fatty acids biosynthesis. Catalyzes the dehydration of short chain beta-hydroxyacyl-ACPs and long chain saturated and unsaturated beta-hydroxyacyl-ACPs. The sequence is that of 3-hydroxyacyl-[acyl-carrier-protein] dehydratase FabZ from Brucella melitensis biotype 2 (strain ATCC 23457).